We begin with the raw amino-acid sequence, 457 residues long: Multidrug resistance protein MdtK (457 aa).

A run of 12 helical transmembrane segments spans residues 11–31 (LLAL…MGFV), 53–73 (IWLP…PVIA), 93–113 (WLVA…GHII), 127–147 (AIGY…FQVL), 160–180 (GMVI…IFIY), 188–208 (LGGV…YLLM), 239–259 (IAIG…FAVV), 277–297 (ALNF…AATI), 316–336 (RTAI…TIVL), 357–377 (LMLL…GSGV), 387–407 (IFFI…YLLA), and 418–438 (PSGF…MMAL).

The protein belongs to the multi antimicrobial extrusion (MATE) (TC 2.A.66.1) family. MdtK subfamily.

Its subcellular location is the cell inner membrane. In terms of biological role, multidrug efflux pump that functions probably as a Na(+)/drug antiporter. The chain is Multidrug resistance protein MdtK from Edwardsiella ictaluri (strain 93-146).